The sequence spans 438 residues: Transposon Ty2-LR1 Gag polyprotein (438 aa).

3 stretches are compositionally biased toward polar residues: residues 1–11 (MESQQLHQNPH), 19–39 (ASVT…SASN), and 49–60 (KVNSQQETTPGT). Disordered regions lie at residues 1-86 (MESQ…GQYQ), 364-397 (KNVS…AKAH), and 419-438 (SSQY…TERI). The interval 295–397 (ENNINVSDRL…SSKPRAAKAH (103 aa)) is RNA-binding. The segment covering 369–381 (TSPNTTNTKVTTR) has biased composition (low complexity).

Homotrimer.

Its subcellular location is the cytoplasm. In terms of biological role, capsid protein (CA) is the structural component of the virus-like particle (VLP), forming the shell that encapsulates the retrotransposons dimeric RNA genome. The particles are assembled from trimer-clustered units and there are holes in the capsid shells that allow for the diffusion of macromolecules. CA also has nucleocapsid-like chaperone activity, promoting primer tRNA(i)-Met annealing to the multipartite primer-binding site (PBS), dimerization of Ty2 RNA and initiation of reverse transcription. The protein is Transposon Ty2-LR1 Gag polyprotein (TY2A-LR1) of Saccharomyces cerevisiae (strain ATCC 204508 / S288c) (Baker's yeast).